Consider the following 203-residue polypeptide: RNA annealing protein YRA2 (203 aa).

Position 1 is an N-acetylmethionine (M1). Disordered regions lie at residues 1–60 (MDKA…REEP) and 137–203 (QPQR…YMKG). Residues 11 to 20 (NSHTDSSSNH) show a composition bias toward polar residues. Positions 47–60 (SRSKDRLYREREEP) are enriched in basic and acidic residues. The RRM domain maps to 64–138 (KRIRISKIPL…AKIEVEIYQP (75 aa)). 2 stretches are compositionally biased toward basic residues: residues 139-153 (QRKHSRMNAHNRRKQ) and 163-180 (PGSHYRQRPNRVSKKNKG).

The protein belongs to the YRA1 family. As to quaternary structure, associates with mRNPs. Interacts with YRA1.

The protein resides in the nucleus. Involved in export of poly(A) mRNAs from the nucleus. Recruited to the coding sequences as well as poly-A sites of active genes. The sequence is that of RNA annealing protein YRA2 (YRA2) from Saccharomyces cerevisiae (strain Lalvin EC1118 / Prise de mousse) (Baker's yeast).